The following is a 338-amino-acid chain: Lipoate-protein ligase A (338 aa).

Residues 29 to 216 (PATQRVLFLW…AFFAHYGERV (188 aa)) form the BPL/LPL catalytic domain. ATP-binding positions include Arg71, 76–79 (GAVF), and Lys134. A (R)-lipoate-binding site is contributed by Lys134.

Belongs to the LplA family. As to quaternary structure, monomer.

The protein localises to the cytoplasm. It carries out the reaction L-lysyl-[lipoyl-carrier protein] + (R)-lipoate + ATP = N(6)-[(R)-lipoyl]-L-lysyl-[lipoyl-carrier protein] + AMP + diphosphate + H(+). It functions in the pathway protein modification; protein lipoylation via exogenous pathway; protein N(6)-(lipoyl)lysine from lipoate: step 1/2. Its pathway is protein modification; protein lipoylation via exogenous pathway; protein N(6)-(lipoyl)lysine from lipoate: step 2/2. Catalyzes both the ATP-dependent activation of exogenously supplied lipoate to lipoyl-AMP and the transfer of the activated lipoyl onto the lipoyl domains of lipoate-dependent enzymes. The chain is Lipoate-protein ligase A from Salmonella paratyphi B (strain ATCC BAA-1250 / SPB7).